We begin with the raw amino-acid sequence, 121 residues long: Holin-like protein CidA (121 aa).

The next 3 helical transmembrane spans lie at 27–47, 58–78, and 89–109; these read VHLP…SLKF, GADF…VAVI, and IDLI…TGIL.

This sequence belongs to the CidA/LrgA family. CidA subfamily.

The protein resides in the cell membrane. Its function is as follows. Increases the activity of extracellular murein hydrolases possibly by mediating their export via hole formation. Inhibited by the antiholin-like proteins LrgAB. In an unstressed cell, the LrgAB products probably inhibit the function of the CidA protein. When a cell is stressed by the addition of antibiotics or by other factors in the environment, CidA possibly oligomerizes within the bacterial cell membrane, creating lesions that disrupt the proton motive force, which in turn results in loss of cell viability. These lesions are also hypothesized to regulate the subsequent cell lysis by either allowing the murein hydrolases access to the cell wall substrate and/or regulating their activity by a possible change in the cell wall pH that results from loss of membrane potential. In Bacillus cytotoxicus (strain DSM 22905 / CIP 110041 / 391-98 / NVH 391-98), this protein is Holin-like protein CidA.